Here is a 766-residue protein sequence, read N- to C-terminus: Serine/threonine-protein kinase DCLK2 (766 aa).

The disordered stretch occupies residues 1–45; that stretch reads MASTRSIELEHFEERDKRPRPGSRRGAPSSSGGSSSSGPKGNGLI. A compositionally biased stretch (basic and acidic residues) spans 7–19; it reads IELEHFEERDKRP. Residues 24–39 are compositionally biased toward low complexity; that stretch reads RRGAPSSSGGSSSSGP. The residue at position 61 (Thr61) is a Phosphothreonine. Doublecortin domains are found at residues 72–158 and 197–280; these read KKAR…VDYT and KLVT…AQDD. 2 stretches are compositionally biased toward low complexity: residues 300–312 and 324–347; these read AVKYSGSKSPGPS and TPSSQLSTPKSTKSSSSSPTSPGS. A disordered region spans residues 300-378; it reads AVKYSGSKSP…ELDRCISPEG (79 aa). At Ser362 the chain carries Phosphoserine. The 258-residue stretch at 394-651 folds into the Protein kinase domain; sequence YKIGKVIGDG…AGQILSHPWV (258 aa). ATP contacts are provided by residues 400–408 and Lys423; that span reads IGDGNFAVV. Asp515 (proton acceptor) is an active-site residue. Ser647 carries the post-translational modification Phosphoserine. Thr666 is modified (phosphothreonine). The tract at residues 707-766 is disordered; it reads CQDSGRPGMEPISPVPPSVEEIPVPGEAVPAPTPPESPTPHPPPAAPGGERAGTWRRHRD. A compositionally biased stretch (low complexity) spans 724-736; sequence SVEEIPVPGEAVP. Pro residues predominate over residues 737–752; sequence APTPPESPTPHPPPAA.

This sequence belongs to the protein kinase superfamily. CAMK Ser/Thr protein kinase family. CaMK subfamily. In terms of assembly, binds to and stabilizes microtubules. Interacts with MAPK8IP1/JIP-1, MAPK8IP2/JIP-2, MAPK9/JNK2, PPP1R9B/NEURABIN-2 and actin. In terms of processing, autophosphorylated. Expressed in the brain, heart and eyes.

It localises to the cytoplasm. Its subcellular location is the cytoskeleton. The catalysed reaction is L-seryl-[protein] + ATP = O-phospho-L-seryl-[protein] + ADP + H(+). It catalyses the reaction L-threonyl-[protein] + ATP = O-phospho-L-threonyl-[protein] + ADP + H(+). In terms of biological role, protein kinase with a significantly reduced C(a2+)/CAM affinity and dependence compared to other members of the CaMK family. May play a role in the down-regulation of CRE-dependent gene activation probably by phosphorylation of the CREB coactivator CRTC2/TORC2 and the resulting retention of TORC2 in the cytoplasm. This Homo sapiens (Human) protein is Serine/threonine-protein kinase DCLK2 (DCLK2).